The following is a 270-amino-acid chain: Diaminopimelate epimerase (270 aa).

Residues Asn-15, Gln-49, and Asn-66 each contribute to the substrate site. The active-site Proton donor is the Cys-75. Residues 76-77 (GN), Asn-155, Asn-187, and 204-205 (ER) each bind substrate. The active-site Proton acceptor is Cys-213. Substrate is bound at residue 214–215 (GS).

Belongs to the diaminopimelate epimerase family. Homodimer.

It localises to the cytoplasm. It catalyses the reaction (2S,6S)-2,6-diaminopimelate = meso-2,6-diaminopimelate. Its pathway is amino-acid biosynthesis; L-lysine biosynthesis via DAP pathway; DL-2,6-diaminopimelate from LL-2,6-diaminopimelate: step 1/1. Functionally, catalyzes the stereoinversion of LL-2,6-diaminopimelate (L,L-DAP) to meso-diaminopimelate (meso-DAP), a precursor of L-lysine and an essential component of the bacterial peptidoglycan. This Rickettsia akari (strain Hartford) protein is Diaminopimelate epimerase.